Here is a 118-residue protein sequence, read N- to C-terminus: Probable non-functional immunoglobulin lambda variable 2-33 (118 aa).

An N-terminal signal peptide occupies residues 1–19; the sequence is MAWALLLLTLLTQGTGSWA. Residues 20-44 are framework-1; sequence QSALTQPPFVSGAPGQSVTISCTGT. Residues 34 to 118 form the Ig-like domain; the sequence is GQSVTISCTG…CSLYSSSYTF (85 aa). An intrachain disulfide couples C41 to C109. The interval 45–53 is complementarity-determining-1; that stretch reads SSDVGDYDH. Positions 54–70 are framework-2; the sequence is VFWYQKRLSTTSRLLIY. Residues 71–73 form a complementarity-determining-2 region; it reads NVN. The interval 74-109 is framework-3; the sequence is TRPSGISDLFSGSKSGNMASLTISGLKSEVEANYHC. The tract at residues 110 to 118 is complementarity-determining-3; the sequence is SLYSSSYTF.

In terms of assembly, immunoglobulins are composed of two identical heavy chains and two identical light chains; disulfide-linked.

It localises to the secreted. It is found in the cell membrane. In terms of biological role, probable non-functional open reading frame (ORF) of V region of the variable domain of immunoglobulin light chains. Non-functional ORF generally cannot participate in the synthesis of a productive immunoglobulin chain due to altered V-(D)-J or switch recombination and/or splicing site (at mRNA level) and/or conserved amino acid change (protein level). Immunoglobulins, also known as antibodies, are membrane-bound or secreted glycoproteins produced by B lymphocytes. In the recognition phase of humoral immunity, the membrane-bound immunoglobulins serve as receptors which, upon binding of a specific antigen, trigger the clonal expansion and differentiation of B lymphocytes into immunoglobulins-secreting plasma cells. Secreted immunoglobulins mediate the effector phase of humoral immunity, which results in the elimination of bound antigens. The antigen binding site is formed by the variable domain of one heavy chain, together with that of its associated light chain. Thus, each immunoglobulin has two antigen binding sites with remarkable affinity for a particular antigen. The variable domains are assembled by a process called V-(D)-J rearrangement and can then be subjected to somatic hypermutations which, after exposure to antigen and selection, allow affinity maturation for a particular antigen. This Homo sapiens (Human) protein is Probable non-functional immunoglobulin lambda variable 2-33.